We begin with the raw amino-acid sequence, 114 residues long: Cytochrome c oxidase subunit 7A2-like, mitochondrial (114 aa).

The transit peptide at 1 to 55 (MYYKFSGFTQKLAGAWASEAYSPQGLKPVVSTEAPPIIFATPTKLTSDSTVYDYA) directs the protein to the mitochondrion. At lysine 69 the chain carries N6-acetyllysine. Residues 82–107 (PDQMLYRTTMALTVGGTIYCLIALYM) form a helical membrane-spanning segment.

The protein belongs to the cytochrome c oxidase VIIa family. As to quaternary structure, interacts with the mitochondrial respiratory complexes III (CIII) and IV (CIV), promoting their association.

The protein resides in the mitochondrion inner membrane. Functionally, assembly factor that mediates the formation of some mitochondrial respiratory supercomplexes (respirasomes), thereby promoting oxidative phosphorylation and energy metabolism. Acts as a molecular adapter that associates with both mitochondrial respiratory complexes III (CIII) and IV (CIV), promoting their association. Mediates the formation of various mitochondrial respiratory supercomplexes, such as MCIII(2)IV(2), composed of two CIII and two CIV, and the CS-respirasome (MCI(1)III(2)IV(2)), composed of one CI, two CIII and two CIV. Not involved in the formation of the canonical respirasome (MCI(1)III(2)IV(1)), composed of one CI, two CIII and one CIV. The formation of different respirasomes is important for cell adaptation to oxygen conditions and prevent metabolic exhaustion: supercomplexes mediated by COX7A2L/SCAF1 are required to maintain oxidative phosphorylation upon low oxygen conditions and promote metabolic rewiring toward glycolysis. This Homo sapiens (Human) protein is Cytochrome c oxidase subunit 7A2-like, mitochondrial.